Here is a 39-residue protein sequence, read N- to C-terminus: Large ribosomal subunit protein bL36 (39 aa).

Belongs to the bacterial ribosomal protein bL36 family.

This Leuconostoc mesenteroides subsp. mesenteroides (strain ATCC 8293 / DSM 20343 / BCRC 11652 / CCM 1803 / JCM 6124 / NCDO 523 / NBRC 100496 / NCIMB 8023 / NCTC 12954 / NRRL B-1118 / 37Y) protein is Large ribosomal subunit protein bL36.